Consider the following 101-residue polypeptide: ATP synthase subunit c (101 aa).

Transmembrane regions (helical) follow at residues 28–48 (SVVA…VGMG) and 72–92 (MFIA…IALI).

It belongs to the ATPase C chain family. In terms of assembly, F-type ATPases have 2 components, F(1) - the catalytic core - and F(0) - the membrane proton channel. F(1) has five subunits: alpha(3), beta(3), gamma(1), delta(1), epsilon(1). F(0) has three main subunits: a(1), b(2) and c(10-14). The alpha and beta chains form an alternating ring which encloses part of the gamma chain. F(1) is attached to F(0) by a central stalk formed by the gamma and epsilon chains, while a peripheral stalk is formed by the delta and b chains.

Its subcellular location is the cell inner membrane. F(1)F(0) ATP synthase produces ATP from ADP in the presence of a proton or sodium gradient. F-type ATPases consist of two structural domains, F(1) containing the extramembraneous catalytic core and F(0) containing the membrane proton channel, linked together by a central stalk and a peripheral stalk. During catalysis, ATP synthesis in the catalytic domain of F(1) is coupled via a rotary mechanism of the central stalk subunits to proton translocation. Functionally, key component of the F(0) channel; it plays a direct role in translocation across the membrane. A homomeric c-ring of between 10-14 subunits forms the central stalk rotor element with the F(1) delta and epsilon subunits. In Sulfurovum sp. (strain NBC37-1), this protein is ATP synthase subunit c.